The chain runs to 124 residues: Small ribosomal subunit protein uS13 (124 aa).

The tract at residues 95-124 (GLPVRGQRTKTNARTRKGPKRTIAGKKKAR) is disordered.

The protein belongs to the universal ribosomal protein uS13 family. Part of the 30S ribosomal subunit. Forms a loose heterodimer with protein S19. Forms two bridges to the 50S subunit in the 70S ribosome.

In terms of biological role, located at the top of the head of the 30S subunit, it contacts several helices of the 16S rRNA. In the 70S ribosome it contacts the 23S rRNA (bridge B1a) and protein L5 of the 50S subunit (bridge B1b), connecting the 2 subunits; these bridges are implicated in subunit movement. Contacts the tRNAs in the A and P-sites. The polypeptide is Small ribosomal subunit protein uS13 (Mycobacteroides abscessus (strain ATCC 19977 / DSM 44196 / CCUG 20993 / CIP 104536 / JCM 13569 / NCTC 13031 / TMC 1543 / L948) (Mycobacterium abscessus)).